A 117-amino-acid chain; its full sequence is Type II secretion system protein I (117 aa).

The propeptide at 1-6 (MKSKRG) is leader sequence. Residue Phe-7 is modified to N-methylphenylalanine. Residues 7–27 (FTLLEVLVALAIFATAAISVI) form a helical membrane-spanning segment.

This sequence belongs to the GSP I family. As to quaternary structure, type II secretion is composed of four main components: the outer membrane complex, the inner membrane complex, the cytoplasmic secretion ATPase and the periplasm-spanning pseudopilus. Interacts with core component EpsG. Cleaved by prepilin peptidase. Post-translationally, methylated by prepilin peptidase at the amino group of the N-terminal phenylalanine once the leader sequence is cleaved by prepilin peptidase.

It localises to the cell inner membrane. Its function is as follows. Component of the type II secretion system required for the energy-dependent secretion of extracellular factors such as proteases and toxins from the periplasm. Part of the pseudopilus tip complex that is critical for the recognition and binding of secretion substrates. This chain is Type II secretion system protein I (epsI), found in Vibrio cholerae serotype O1 (strain ATCC 39315 / El Tor Inaba N16961).